The primary structure comprises 65 residues: MNISDIRGLSDTEIKKKLEDSHKELFELRLKLSTRQLVNHRELPRVKNDIARILTVMRERELQIR.

The protein belongs to the universal ribosomal protein uL29 family.

The chain is Large ribosomal subunit protein uL29 from Dehalococcoides mccartyi (strain ATCC BAA-2100 / JCM 16839 / KCTC 5957 / BAV1).